Here is a 274-residue protein sequence, read N- to C-terminus: 2,3,4,5-tetrahydropyridine-2,6-dicarboxylate N-succinyltransferase (274 aa).

Substrate contacts are provided by arginine 107 and aspartate 144.

This sequence belongs to the transferase hexapeptide repeat family. Homotrimer.

It localises to the cytoplasm. It carries out the reaction (S)-2,3,4,5-tetrahydrodipicolinate + succinyl-CoA + H2O = (S)-2-succinylamino-6-oxoheptanedioate + CoA. It participates in amino-acid biosynthesis; L-lysine biosynthesis via DAP pathway; LL-2,6-diaminopimelate from (S)-tetrahydrodipicolinate (succinylase route): step 1/3. In Paracoccus denitrificans (strain Pd 1222), this protein is 2,3,4,5-tetrahydropyridine-2,6-dicarboxylate N-succinyltransferase.